The primary structure comprises 292 residues: 4-diphosphocytidyl-2-C-methyl-D-erythritol kinase (292 aa).

Lys-20 is an active-site residue. 103-113 contributes to the ATP binding site; it reads PMGGGIGGGSS. Asp-145 is a catalytic residue.

It belongs to the GHMP kinase family. IspE subfamily.

It catalyses the reaction 4-CDP-2-C-methyl-D-erythritol + ATP = 4-CDP-2-C-methyl-D-erythritol 2-phosphate + ADP + H(+). It participates in isoprenoid biosynthesis; isopentenyl diphosphate biosynthesis via DXP pathway; isopentenyl diphosphate from 1-deoxy-D-xylulose 5-phosphate: step 3/6. Catalyzes the phosphorylation of the position 2 hydroxy group of 4-diphosphocytidyl-2C-methyl-D-erythritol. The sequence is that of 4-diphosphocytidyl-2-C-methyl-D-erythritol kinase from Cupriavidus taiwanensis (strain DSM 17343 / BCRC 17206 / CCUG 44338 / CIP 107171 / LMG 19424 / R1) (Ralstonia taiwanensis (strain LMG 19424)).